The chain runs to 290 residues: Fat storage-inducing transmembrane protein 1 (290 aa).

Helical transmembrane passes span 1-21 (MFLN…LGNT), 26-46 (HFHL…LWVS), 65-85 (SGWG…SFSV), 173-193 (LLLC…GPYL), and 205-225 (ILFL…LCLL).

It belongs to the FIT family. FIT1 subfamily.

The protein resides in the endoplasmic reticulum membrane. Its function is as follows. May play an important role in the formation of lipid droplets (LDs) which are storage organelles at the center of lipid and energy homeostasis. May directly bind to diacylglycerol (DAGs) and triacylglycerol. The polypeptide is Fat storage-inducing transmembrane protein 1 (fitm1l) (Danio rerio (Zebrafish)).